The sequence spans 95 residues: Integration host factor subunit beta (95 aa).

This sequence belongs to the bacterial histone-like protein family. Heterodimer of an alpha and a beta chain.

This protein is one of the two subunits of integration host factor, a specific DNA-binding protein that functions in genetic recombination as well as in transcriptional and translational control. The chain is Integration host factor subunit beta from Klebsiella pneumoniae subsp. pneumoniae (strain ATCC 700721 / MGH 78578).